The sequence spans 344 residues: S-adenosylmethionine:tRNA ribosyltransferase-isomerase (344 aa).

Belongs to the QueA family. Monomer.

The protein resides in the cytoplasm. The enzyme catalyses 7-aminomethyl-7-carbaguanosine(34) in tRNA + S-adenosyl-L-methionine = epoxyqueuosine(34) in tRNA + adenine + L-methionine + 2 H(+). It participates in tRNA modification; tRNA-queuosine biosynthesis. Functionally, transfers and isomerizes the ribose moiety from AdoMet to the 7-aminomethyl group of 7-deazaguanine (preQ1-tRNA) to give epoxyqueuosine (oQ-tRNA). In Lactiplantibacillus plantarum (strain ATCC BAA-793 / NCIMB 8826 / WCFS1) (Lactobacillus plantarum), this protein is S-adenosylmethionine:tRNA ribosyltransferase-isomerase.